The chain runs to 304 residues: CBY1-interacting BAR domain-containing protein 2 (304 aa).

A BAR-like region spans residues 6-217 (SRDSQVRVME…EKYDLERDLL (212 aa)).

This sequence belongs to the CIBAR family. As to quaternary structure, homodimer (via BAR-like domain). Heterodimer (via BAR-like domain) with FAM92A. Interacts with CBY1. Restricted to certain tissues, most prominently expressed in multicilaited tissues.

It localises to the cytoplasm. It is found in the cytoskeleton. The protein localises to the microtubule organizing center. Its subcellular location is the centrosome. The protein resides in the centriole. It localises to the cilium basal body. May play a role in ciliogenesis. In cooperation with CBY1 may facilitate ciliogenesis likely by the recruitment and fusion of endosomal vesicles at distal appendages during early stages of ciliogenesis. The chain is CBY1-interacting BAR domain-containing protein 2 from Homo sapiens (Human).